Here is a 557-residue protein sequence, read N- to C-terminus: Potassium-transporting ATPase potassium-binding subunit (557 aa).

The next 12 helical transmembrane spans lie at Gly-5 to Ser-25, Leu-63 to Gly-83, Gly-132 to Ile-152, Leu-170 to Ile-190, Phe-253 to Val-273, Leu-283 to Val-303, Val-329 to Ala-349, Ala-356 to Val-376, Gly-379 to Gly-399, Leu-416 to Met-436, Leu-484 to Ala-504, and Leu-526 to Ala-546.

The protein belongs to the KdpA family. As to quaternary structure, the system is composed of three essential subunits: KdpA, KdpB and KdpC.

The protein localises to the cell inner membrane. Functionally, part of the high-affinity ATP-driven potassium transport (or Kdp) system, which catalyzes the hydrolysis of ATP coupled with the electrogenic transport of potassium into the cytoplasm. This subunit binds the periplasmic potassium ions and delivers the ions to the membrane domain of KdpB through an intramembrane tunnel. This Shigella boydii serotype 4 (strain Sb227) protein is Potassium-transporting ATPase potassium-binding subunit.